Consider the following 265-residue polypeptide: Phosphate import ATP-binding protein PstB (265 aa).

In terms of domain architecture, ABC transporter spans 18–260 (ISARDVQVFY…PEDPRTESYI (243 aa)). An ATP-binding site is contributed by 50 to 57 (GPSGCGKS).

It belongs to the ABC transporter superfamily. Phosphate importer (TC 3.A.1.7) family. In terms of assembly, the complex is composed of two ATP-binding proteins (PstB), two transmembrane proteins (PstC and PstA) and a solute-binding protein (PstS).

It localises to the cell inner membrane. The enzyme catalyses phosphate(out) + ATP + H2O = ADP + 2 phosphate(in) + H(+). Functionally, part of the ABC transporter complex PstSACB involved in phosphate import. Responsible for energy coupling to the transport system. In Roseobacter denitrificans (strain ATCC 33942 / OCh 114) (Erythrobacter sp. (strain OCh 114)), this protein is Phosphate import ATP-binding protein PstB.